The sequence spans 356 residues: Protein pelota homolog (356 aa).

It belongs to the eukaryotic release factor 1 family. Pelota subfamily. In terms of assembly, monomer. The cofactor is a divalent metal cation.

It localises to the cytoplasm. In terms of biological role, may function in recognizing stalled ribosomes, interact with stem-loop structures in stalled mRNA molecules, and effect endonucleolytic cleavage of the mRNA. May play a role in the release non-functional ribosomes and degradation of damaged mRNAs. Has endoribonuclease activity. This chain is Protein pelota homolog, found in Desulfurococcus amylolyticus (strain DSM 18924 / JCM 16383 / VKM B-2413 / 1221n) (Desulfurococcus kamchatkensis).